A 491-amino-acid chain; its full sequence is Protein DETOXIFICATION 20 (491 aa).

12 helical membrane passes run 37–57, 75–95, 120–140, 156–176, 185–205, 214–234, 265–285, 296–316, 337–357, 381–401, 413–433, and 438–458; these read LWVV…VSMV, ITFT…AGAL, IVLT…GPIL, LALW…CQMF, IISY…WLLV, GAMT…LLYV, GGML…TGNL, AICI…LAAV, LIAV…FLFL, LLAF…VAIG, LACY…VVGL, and VWIG…VMTL.

It belongs to the multi antimicrobial extrusion (MATE) (TC 2.A.66.1) family.

It is found in the membrane. In Arabidopsis thaliana (Mouse-ear cress), this protein is Protein DETOXIFICATION 20.